The following is a 557-amino-acid chain: TBCC domain-containing protein 1 (557 aa).

Residues Thr-290 to Leu-435 form the C-CAP/cofactor C-like domain.

It belongs to the TBCC family.

The protein localises to the cytoplasm. Its subcellular location is the cytoskeleton. It is found in the microtubule organizing center. It localises to the centrosome. The protein resides in the spindle pole. Plays a role in the regulation of centrosome and Golgi apparatus positioning, with consequences on cell shape and cell migration. The sequence is that of TBCC domain-containing protein 1 (TBCCD1) from Homo sapiens (Human).